Reading from the N-terminus, the 269-residue chain is Hdr-like menaquinol oxidoreductase iron-sulfur subunit 1 (269 aa).

A signal peptide (tat-type signal) is located at residues 1–26 (MMSRRKFLLLTGAAAAGAILTPQISA). [4Fe-4S] cluster is bound by residues Cys52, Cys55, Cys72, Cys76, Cys118, Cys121, Cys126, Cys130, Cys150, Cys153, Cys156, Cys160, Cys194, Cys197, Cys215, and Cys219. In terms of domain architecture, 4Fe-4S ferredoxin-type spans 141–170 (GIVEIDMHRCIGCRYCMIACPYGARCFNFI).

In terms of assembly, consists of five subunits: an integral membrane subunit, a cytochrome b-like subunit, a cytochrome c subunit and two iron-sulfur subunits. The cofactor is [4Fe-4S] cluster. Predicted to be exported by the Tat system. The position of the signal peptide cleavage has been experimentally proven.

It localises to the cell membrane. Functionally, has menaquinol-oxidizing activity. HmeA, HmeB and HmeE subunits may together catalyze electron transfer from menaquinol to cytochrome c. The protein is Hdr-like menaquinol oxidoreductase iron-sulfur subunit 1 (hmeA) of Archaeoglobus fulgidus (strain ATCC 49558 / DSM 4304 / JCM 9628 / NBRC 100126 / VC-16).